The sequence spans 508 residues: Lysine--tRNA ligase (508 aa).

Residues Glu418 and Glu425 each contribute to the Mg(2+) site.

The protein belongs to the class-II aminoacyl-tRNA synthetase family. As to quaternary structure, homodimer. Mg(2+) is required as a cofactor.

It is found in the cytoplasm. It carries out the reaction tRNA(Lys) + L-lysine + ATP = L-lysyl-tRNA(Lys) + AMP + diphosphate. In Burkholderia pseudomallei (strain 1710b), this protein is Lysine--tRNA ligase.